The sequence spans 345 residues: DNA-directed RNA polymerase subunit alpha (345 aa).

The alpha N-terminal domain (alpha-NTD) stretch occupies residues 1–233; that stretch reads MVRNWCSLIR…KQLQVFVGLH (233 aa). Residues 256 to 345 are alpha C-terminal domain (alpha-CTD); it reads LNDILLRHVE…EEMGEIQEEG (90 aa).

Belongs to the RNA polymerase alpha chain family. As to quaternary structure, homodimer. The RNAP catalytic core consists of 2 alpha, 1 beta, 1 beta' and 1 omega subunit. When a sigma factor is associated with the core the holoenzyme is formed, which can initiate transcription.

It catalyses the reaction RNA(n) + a ribonucleoside 5'-triphosphate = RNA(n+1) + diphosphate. In terms of biological role, DNA-dependent RNA polymerase catalyzes the transcription of DNA into RNA using the four ribonucleoside triphosphates as substrates. The protein is DNA-directed RNA polymerase subunit alpha of Syntrophus aciditrophicus (strain SB).